The chain runs to 95 residues: Small ribosomal subunit protein bS6 (95 aa).

The protein belongs to the bacterial ribosomal protein bS6 family.

Binds together with bS18 to 16S ribosomal RNA. This is Small ribosomal subunit protein bS6 from Caldanaerobacter subterraneus subsp. tengcongensis (strain DSM 15242 / JCM 11007 / NBRC 100824 / MB4) (Thermoanaerobacter tengcongensis).